Here is a 352-residue protein sequence, read N- to C-terminus: Mitochondrial hydrolase YKR070W (352 aa).

It belongs to the HAD-like hydrolase superfamily.

Its subcellular location is the mitochondrion. This Saccharomyces cerevisiae (strain ATCC 204508 / S288c) (Baker's yeast) protein is Mitochondrial hydrolase YKR070W.